Here is a 241-residue protein sequence, read N- to C-terminus: Uridylate kinase (241 aa).

9 to 10 (GS) contributes to the ATP binding site. Position 44 (Gly44) interacts with UMP. Gly45 and Arg49 together coordinate ATP. UMP contacts are provided by residues Asp66 and 114–120 (VVAGQTT). Residues Thr140, Phe146, and Asp149 each contribute to the ATP site.

The protein belongs to the UMP kinase family. As to quaternary structure, homohexamer.

It is found in the cytoplasm. The catalysed reaction is UMP + ATP = UDP + ADP. Its pathway is pyrimidine metabolism; CTP biosynthesis via de novo pathway; UDP from UMP (UMPK route): step 1/1. With respect to regulation, inhibited by UTP. Catalyzes the reversible phosphorylation of UMP to UDP. The chain is Uridylate kinase from Halobacterium salinarum (strain ATCC 29341 / DSM 671 / R1).